The primary structure comprises 462 residues: Serine--tRNA ligase, cytoplasmic (462 aa).

246-248 (TSE) is an L-serine binding site. ATP contacts are provided by residues 279–281 (RRE) and Val295. Glu302 contacts L-serine. 366-369 (ELVS) serves as a coordination point for ATP. L-serine is bound at residue Thr404.

The protein belongs to the class-II aminoacyl-tRNA synthetase family. Type-1 seryl-tRNA synthetase subfamily. In terms of assembly, homodimer. The tRNA molecule binds across the dimer.

It localises to the cytoplasm. The protein localises to the cytosol. It carries out the reaction tRNA(Ser) + L-serine + ATP = L-seryl-tRNA(Ser) + AMP + diphosphate + H(+). Catalyzes the attachment of serine to tRNA(Ser) in a two-step reaction: serine is first activated by ATP to form Ser-AMP and then transferred to the acceptor end of tRNA(Ser). In Candida albicans (strain SC5314 / ATCC MYA-2876) (Yeast), this protein is Serine--tRNA ligase, cytoplasmic (SES1).